The following is a 517-amino-acid chain: Crotonobetaine/carnitine--CoA ligase (517 aa).

The protein belongs to the ATP-dependent AMP-binding enzyme family.

It carries out the reaction 4-(trimethylamino)butanoate + ATP + CoA = 4-(trimethylamino)butanoyl-CoA + AMP + diphosphate. The enzyme catalyses crotonobetaine + ATP + CoA = crotonobetainyl-CoA + AMP + diphosphate. It catalyses the reaction (R)-carnitine + ATP + CoA = (R)-carnitinyl-CoA + AMP + diphosphate. It participates in amine and polyamine metabolism; carnitine metabolism. Functionally, catalyzes the transfer of CoA to carnitine, generating the initial carnitinyl-CoA needed for the CaiB reaction cycle. Also has activity toward crotonobetaine and gamma-butyrobetaine. This chain is Crotonobetaine/carnitine--CoA ligase, found in Escherichia coli O127:H6 (strain E2348/69 / EPEC).